Reading from the N-terminus, the 344-residue chain is Selenide, water dikinase (344 aa).

Residue cysteine 15 is part of the active site. ATP is bound by residues lysine 18 and 46 to 48 (TKD). Aspartate 49 contacts Mg(2+). ATP is bound by residues aspartate 66, aspartate 89, and 137-139 (GHS). A Mg(2+)-binding site is contributed by aspartate 89. Aspartate 225 contributes to the Mg(2+) binding site.

The protein belongs to the selenophosphate synthase 1 family. Class I subfamily. In terms of assembly, homodimer. It depends on Mg(2+) as a cofactor.

The catalysed reaction is hydrogenselenide + ATP + H2O = selenophosphate + AMP + phosphate + 2 H(+). Functionally, synthesizes selenophosphate from selenide and ATP. The protein is Selenide, water dikinase of Colwellia psychrerythraea (strain 34H / ATCC BAA-681) (Vibrio psychroerythus).